The sequence spans 199 residues: Probable DNA-directed RNA polymerase subunit delta (199 aa).

The HTH HARE-type domain occupies 14 to 81; that stretch reads LSLIEVAHAI…GDNMWGLRAW (68 aa). Acidic residues-rich tracts occupy residues 116–147, 157–171, and 182–199; these read GDDDDVIDYDDDDPEDDDNYDDDDDQDDDTDD, AGVDDTDDDVADETL, and LNDDDDDDDYDDEDDESK. A disordered region spans residues 116 to 199; it reads GDDDDVIDYD…DYDDEDDESK (84 aa).

This sequence belongs to the RpoE family. RNAP is composed of a core of 2 alpha, a beta and a beta' subunits. The core is associated with a delta subunit and one of several sigma factors.

Its function is as follows. Participates in both the initiation and recycling phases of transcription. In the presence of the delta subunit, RNAP displays an increased specificity of transcription, a decreased affinity for nucleic acids, and an increased efficiency of RNA synthesis because of enhanced recycling. In Lactiplantibacillus plantarum (strain ATCC BAA-793 / NCIMB 8826 / WCFS1) (Lactobacillus plantarum), this protein is Probable DNA-directed RNA polymerase subunit delta.